Reading from the N-terminus, the 417-residue chain is Phosphoglycerate kinase (417 aa).

(2R)-3-phosphoglycerate-binding residues include Val-23, Asp-24, Phe-25, Asn-26, Gln-38, Arg-39, Ser-62, His-63, Gly-65, Arg-66, Leu-121, Arg-122, His-169, and Arg-170. Position 213 (Gly-213) interacts with ADP. Gly-213 lines the CDP pocket. The AMP site is built by Ala-214 and Lys-215. Residue Ala-214 participates in ATP binding. Ala-214 provides a ligand contact to Mg(2+). Residue Asp-218 coordinates CDP. Asp-218 contacts Mg(2+). Residue Lys-219 participates in AMP binding. Position 219 (Lys-219) interacts with ATP. Gly-237 contacts ADP. CDP is bound at residue Gly-237. Residues Gly-238 and Gly-312 each coordinate AMP. Positions 238 and 312 each coordinate ATP. Residues Gly-337 and Phe-342 each contribute to the CDP site. Phe-342 serves as a coordination point for ADP. Glu-343 is a binding site for AMP. 3 residues coordinate ATP: Glu-343, Asp-374, and Thr-375. Residue Asp-374 participates in Mg(2+) binding.

Belongs to the phosphoglycerate kinase family. Monomer. Requires Mg(2+) as cofactor.

The protein localises to the cytoplasm. It is found in the mitochondrion. It catalyses the reaction (2R)-3-phosphoglycerate + ATP = (2R)-3-phospho-glyceroyl phosphate + ADP. Its pathway is carbohydrate degradation; glycolysis; pyruvate from D-glyceraldehyde 3-phosphate: step 2/5. In terms of biological role, catalyzes one of the two ATP producing reactions in the glycolytic pathway via the reversible conversion of 1,3-diphosphoglycerate to 3-phosphoglycerate. Both L- and D- forms of purine and pyrimidine nucleotides can be used as substrates, but the activity is much lower on pyrimidines. Negatively regulates the biosynthesis of acetyl-CoA from pyruvate in the mitochondrion. This Candida maltosa (Yeast) protein is Phosphoglycerate kinase (PGK1).